We begin with the raw amino-acid sequence, 185 residues long: Superoxide dismutase [Cu-Zn] (185 aa).

The first 18 residues, 1 to 18 (MTAFYKLCGMSMLSLVLA), serve as a signal peptide directing secretion. Cu cation is bound by residues His-85, His-87, and His-102. Residues Cys-92 and Cys-180 are joined by a disulfide bond. Residues His-102, His-111, His-120, and Asp-123 each coordinate Zn(2+). Position 158 (His-158) interacts with Cu cation.

The protein belongs to the Cu-Zn superoxide dismutase family. In terms of assembly, homodimer. Requires Cu cation as cofactor. The cofactor is Zn(2+).

The protein resides in the periplasm. The enzyme catalyses 2 superoxide + 2 H(+) = H2O2 + O2. In terms of biological role, destroys radicals which are normally produced within the cells and which are toxic to biological systems. The chain is Superoxide dismutase [Cu-Zn] (sodC) from Francisella tularensis subsp. holarctica (strain LVS).